We begin with the raw amino-acid sequence, 262 residues long: Zinc finger protein 138 (262 aa).

The C2H2-type 1 zinc finger occupies 110–132; that stretch reads FRCKECDKSLCMLSRLTQHKKIH. Residues 138–160 form a C2H2-type 2; degenerate zinc finger; it reads YKCEECGKTFNWSTNLSKPKKIH. The C2H2-type 3; degenerate zinc finger occupies 166 to 188; it reads YKCEVCGKAFHQSSILTKHKIIR. The C2H2-type 4 zinc finger occupies 194 to 216; sequence YKCAHCGKAFKQSSHLTRHKIIH. The C2H2-type 5; degenerate zinc-finger motif lies at 222 to 244; sequence YKCEQCGKVFKQSPTLTKHQIIY. The segment at 250 to 262 adopts a C2H2-type 6; degenerate zinc-finger fold; the sequence is YKCEECGKAFNLS.

Belongs to the krueppel C2H2-type zinc-finger protein family.

Its subcellular location is the nucleus. In terms of biological role, may be involved in transcriptional regulation as a repressor. The polypeptide is Zinc finger protein 138 (ZNF138) (Homo sapiens (Human)).